Here is a 471-residue protein sequence, read N- to C-terminus: UDP-N-acetylmuramate--L-alanine ligase (471 aa).

Residue 114-120 (GTHGKTT) coordinates ATP.

Belongs to the MurCDEF family.

The protein resides in the cytoplasm. It carries out the reaction UDP-N-acetyl-alpha-D-muramate + L-alanine + ATP = UDP-N-acetyl-alpha-D-muramoyl-L-alanine + ADP + phosphate + H(+). It participates in cell wall biogenesis; peptidoglycan biosynthesis. Cell wall formation. In Brucella abortus (strain S19), this protein is UDP-N-acetylmuramate--L-alanine ligase.